A 361-amino-acid polypeptide reads, in one-letter code: Queuine tRNA-ribosyltransferase (361 aa).

The active-site Proton acceptor is the D92. Substrate is bound by residues 92–96 (DSGGF), D146, Q189, and G216. An RNA binding region spans residues 247–253 (GVGKPAD). The active-site Nucleophile is the D266. Residues 271-275 (TRSGR) form an RNA binding; important for wobble base 34 recognition region. Zn(2+) contacts are provided by C304, C306, C309, and H335.

This sequence belongs to the queuine tRNA-ribosyltransferase family. As to quaternary structure, homodimer. Within each dimer, one monomer is responsible for RNA recognition and catalysis, while the other monomer binds to the replacement base PreQ1. The cofactor is Zn(2+).

The enzyme catalyses 7-aminomethyl-7-carbaguanine + guanosine(34) in tRNA = 7-aminomethyl-7-carbaguanosine(34) in tRNA + guanine. It functions in the pathway tRNA modification; tRNA-queuosine biosynthesis. In terms of biological role, catalyzes the base-exchange of a guanine (G) residue with the queuine precursor 7-aminomethyl-7-deazaguanine (PreQ1) at position 34 (anticodon wobble position) in tRNAs with GU(N) anticodons (tRNA-Asp, -Asn, -His and -Tyr). Catalysis occurs through a double-displacement mechanism. The nucleophile active site attacks the C1' of nucleotide 34 to detach the guanine base from the RNA, forming a covalent enzyme-RNA intermediate. The proton acceptor active site deprotonates the incoming PreQ1, allowing a nucleophilic attack on the C1' of the ribose to form the product. After dissociation, two additional enzymatic reactions on the tRNA convert PreQ1 to queuine (Q), resulting in the hypermodified nucleoside queuosine (7-(((4,5-cis-dihydroxy-2-cyclopenten-1-yl)amino)methyl)-7-deazaguanosine). This Rickettsia bellii (strain OSU 85-389) protein is Queuine tRNA-ribosyltransferase.